The sequence spans 129 residues: Protein Turandot A2 (129 aa).

The first 21 residues, 1–21, serve as a signal peptide directing secretion; that stretch reads MNSSTSLMCFALLLISPLCMG. Residue Asn49 is glycosylated (N-linked (GlcNAc...) asparagine).

This sequence belongs to the Turandot family.

Its subcellular location is the secreted. Its function is as follows. A humoral factor that plays a role in stress tolerance; gives increased resistance to the lethal effects of bacterial challenge and stress. Regulated by the JAK/STAT pathway and NF-KB-like Relish pathway in the fat body, upd3 in the hemocytes and Mekk1 in response to septic injury and consequent immune response. The sequence is that of Protein Turandot A2 (TotA2) from Drosophila simulans (Fruit fly).